The chain runs to 128 residues: CD59 glycoprotein (128 aa).

A signal peptide spans 1 to 25 (MGIQGGSVLFGLLLVLAVFCHSGHS). Residues 26 to 108 (LQCYNCPNPT…QLENGGTSLS (83 aa)) form the UPAR/Ly6 domain. Cystine bridges form between Cys-28–Cys-51, Cys-31–Cys-38, Cys-44–Cys-64, Cys-70–Cys-88, and Cys-89–Cys-94. N-linked (GlcNAc...) asparagine glycosylation is present at Asn-43. Residue Asn-102 is the site of GPI-anchor amidated asparagine attachment. Residues 103–128 (GGTSLSEKTVVLLVTLLLAAAWCLHP) constitute a propeptide, removed in mature form.

Interacts with T-cell surface antigen CD2. In terms of processing, N- and O-glycosylated.

It is found in the cell membrane. The protein resides in the secreted. Its function is as follows. Potent inhibitor of the complement membrane attack complex (MAC) action, which protects self-cells from damage during complement activation. Acts by binding to the beta-haipins of C8 (C8A and C8B) components of the assembling MAC, forming an intermolecular beta-sheet that prevents incorporation of the multiple copies of C9 required for complete formation of the osmolytic pore. This Chlorocebus aethiops (Green monkey) protein is CD59 glycoprotein.